Here is a 269-residue protein sequence, read N- to C-terminus: UPF0761 membrane protein HI_0276 (269 aa).

A run of 6 helical transmembrane segments spans residues 32 to 52 (MLAM…FPVF), 89 to 109 (MSAV…NNID), 128 to 148 (FAIY…SIGI), 168 to 188 (LLSF…YTVV), 203 to 223 (FLAA…IVTF), and 232 to 252 (AMAT…VVLV).

This sequence belongs to the UPF0761 family.

The protein localises to the cell inner membrane. The polypeptide is UPF0761 membrane protein HI_0276 (Haemophilus influenzae (strain ATCC 51907 / DSM 11121 / KW20 / Rd)).